The chain runs to 423 residues: Histidine--tRNA ligase (423 aa).

Belongs to the class-II aminoacyl-tRNA synthetase family. Homodimer.

The protein resides in the cytoplasm. It catalyses the reaction tRNA(His) + L-histidine + ATP = L-histidyl-tRNA(His) + AMP + diphosphate + H(+). This chain is Histidine--tRNA ligase, found in Orientia tsutsugamushi (strain Ikeda) (Rickettsia tsutsugamushi).